The chain runs to 326 residues: tRNA dimethylallyltransferase (326 aa).

10–17 (GPTGTGKT) is an ATP binding site. A substrate-binding site is contributed by 12–17 (TGTGKT). The tract at residues 35-38 (DSMQ) is interaction with substrate tRNA.

It belongs to the IPP transferase family. In terms of assembly, monomer. The cofactor is Mg(2+).

The catalysed reaction is adenosine(37) in tRNA + dimethylallyl diphosphate = N(6)-dimethylallyladenosine(37) in tRNA + diphosphate. Its function is as follows. Catalyzes the transfer of a dimethylallyl group onto the adenine at position 37 in tRNAs that read codons beginning with uridine, leading to the formation of N6-(dimethylallyl)adenosine (i(6)A). The polypeptide is tRNA dimethylallyltransferase (Dictyoglomus turgidum (strain DSM 6724 / Z-1310)).